We begin with the raw amino-acid sequence, 481 residues long: Sestrin-1 (481 aa).

Residues 63-244 form an N-terminal domain; may mediate the alkylhydroperoxide reductase activity region; it reads FADAFTDLGR…ICDITNGNHG (182 aa). Cys122 functions as the Cysteine sulfenic acid (-SOH) intermediate in the catalytic mechanism. Residues 295–316 form a disordered region; sequence KTESMVFSTEDEDPPPDIDVSR. The segment at 310–481 is C-terminal domain; mediates TORC1 regulation; sequence PDIDVSRHFE…ALRAITRYMT (172 aa). L-leucine-binding positions include 375-378, Thr387, and Glu452; that span reads TYNT.

The protein belongs to the sestrin family.

The protein localises to the nucleus. It localises to the cytoplasm. It catalyses the reaction a hydroperoxide + L-cysteinyl-[protein] = S-hydroxy-L-cysteinyl-[protein] + an alcohol. May function as an intracellular leucine sensor that negatively regulates the TORC1 signaling pathway through the GATOR complex. In absence of leucine, binds the GATOR subcomplex GATOR2 and prevents TORC1 signaling. Binding of leucine to SESN2 disrupts its interaction with GATOR2 thereby activating the TORC1 signaling pathway. This stress-inducible metabolic regulator may also play a role in protection against oxidative and genotoxic stresses. May prevent the accumulation of reactive oxygen species (ROS) through the alkylhydroperoxide reductase activity born by the N-terminal domain of the protein. This chain is Sestrin-1, found in Xenopus laevis (African clawed frog).